Here is a 517-residue protein sequence, read N- to C-terminus: Crotonobetaine/carnitine--CoA ligase (517 aa).

It belongs to the ATP-dependent AMP-binding enzyme family.

It carries out the reaction 4-(trimethylamino)butanoate + ATP + CoA = 4-(trimethylamino)butanoyl-CoA + AMP + diphosphate. The catalysed reaction is crotonobetaine + ATP + CoA = crotonobetainyl-CoA + AMP + diphosphate. It catalyses the reaction (R)-carnitine + ATP + CoA = (R)-carnitinyl-CoA + AMP + diphosphate. Its pathway is amine and polyamine metabolism; carnitine metabolism. In terms of biological role, catalyzes the transfer of CoA to carnitine, generating the initial carnitinyl-CoA needed for the CaiB reaction cycle. Also has activity toward crotonobetaine and gamma-butyrobetaine. The chain is Crotonobetaine/carnitine--CoA ligase from Salmonella paratyphi C (strain RKS4594).